We begin with the raw amino-acid sequence, 238 residues long: Ribonuclease 3 (238 aa).

An RNase III domain is found at 9–141 (LIDFMEKIGY…VVAAVYIDGG (133 aa)). Glu-54 lines the Mg(2+) pocket. Asp-58 is an active-site residue. Mg(2+) is bound by residues Asp-127 and Glu-130. Residue Glu-130 is part of the active site. Residues 168 to 237 (DYKTSLQEIT…ARRAIEKLKG (70 aa)) enclose the DRBM domain.

This sequence belongs to the ribonuclease III family. In terms of assembly, homodimer. The cofactor is Mg(2+).

The protein localises to the cytoplasm. The catalysed reaction is Endonucleolytic cleavage to 5'-phosphomonoester.. Digests double-stranded RNA. Involved in the processing of primary rRNA transcript to yield the immediate precursors to the large and small rRNAs (23S and 16S). Processes some mRNAs, and tRNAs when they are encoded in the rRNA operon. Processes pre-crRNA and tracrRNA of type II CRISPR loci if present in the organism. The polypeptide is Ribonuclease 3 (Pseudothermotoga lettingae (strain ATCC BAA-301 / DSM 14385 / NBRC 107922 / TMO) (Thermotoga lettingae)).